Here is a 280-residue protein sequence, read N- to C-terminus: 4-diphosphocytidyl-2-C-methyl-D-erythritol kinase (280 aa).

The active site involves K8. ATP is bound at residue 91 to 101 (PVSAGLAGGST). D133 is an active-site residue.

This sequence belongs to the GHMP kinase family. IspE subfamily.

The catalysed reaction is 4-CDP-2-C-methyl-D-erythritol + ATP = 4-CDP-2-C-methyl-D-erythritol 2-phosphate + ADP + H(+). Its pathway is isoprenoid biosynthesis; isopentenyl diphosphate biosynthesis via DXP pathway; isopentenyl diphosphate from 1-deoxy-D-xylulose 5-phosphate: step 3/6. Catalyzes the phosphorylation of the position 2 hydroxy group of 4-diphosphocytidyl-2C-methyl-D-erythritol. This Clostridium botulinum (strain Eklund 17B / Type B) protein is 4-diphosphocytidyl-2-C-methyl-D-erythritol kinase.